The primary structure comprises 219 residues: Probable glucosamine 6-phosphate N-acetyltransferase (219 aa).

The region spanning 42–198 is the N-acetyltransferase domain; that stretch reads MKVRPLKDTD…EGPTLKRNAT (157 aa). Substrate is bound by residues Thr-64, 111-114, and 123-125; these read KFIH and EDV. 133 to 138 contributes to the acetyl-CoA binding site; the sequence is GKQLGK. Residues 154 to 155 and Arg-186 each bind substrate; that span reads YK.

The protein belongs to the acetyltransferase family. GNA1 subfamily.

The enzyme catalyses D-glucosamine 6-phosphate + acetyl-CoA = N-acetyl-D-glucosamine 6-phosphate + CoA + H(+). The protein operates within nucleotide-sugar biosynthesis; UDP-N-acetyl-alpha-D-glucosamine biosynthesis; N-acetyl-alpha-D-glucosamine 1-phosphate from alpha-D-glucosamine 6-phosphate (route I): step 1/2. The chain is Probable glucosamine 6-phosphate N-acetyltransferase from Drosophila melanogaster (Fruit fly).